The following is a 211-amino-acid chain: Arginine exporter protein ArgO (211 aa).

A run of 6 helical transmembrane segments spans residues 1–21, 37–57, 68–88, 111–131, 147–167, and 179–199; these read MISY…PLGP, LMIA…GIFG, LLAL…FGAL, IIAT…DTFV, WFAL…ALLA, and AQRI…FQLA.

The protein belongs to the LysE/ArgO transporter (TC 2.A.75) family.

The protein resides in the cell inner membrane. It carries out the reaction L-arginine(in) = L-arginine(out). Its function is as follows. Involved in the export of arginine. Important to control the intracellular level of arginine and the correct balance between arginine and lysine. The sequence is that of Arginine exporter protein ArgO from Salmonella choleraesuis (strain SC-B67).